We begin with the raw amino-acid sequence, 420 residues long: MTLNEKKSINECDLKGKKTLVRVDFNVPVKGGVITNDYRIRSALPTIQKVLNEGGSCILMSHLGRPKGISISEAAAVRSAGKVPGYEEAATLRPVAQRLGELLSKPVVFAPDCLDAADVVKKMSPGDVVLLENVRFYREEGSKKEEEREAMAKVLASYGDIFVSDAFGTAHRDSATMTGIPKVLGHGAAGYLMEKEISYFSKVLGNPPRPLVAIVGGSKVSDKIQLLDNMLQRIDYLLIGGAMAYTFLKAQGHRIGTSMCEEDRLDLARSLLKKAEDRKVQVLLPVDHVCHTEFKAVDTPVVTADADIPDGHMALDIGPKTIANYVETIGKCKSAIWNGPMGVFEMTPYSKGTFAVAKAMGDCTQKNGLMSIIGGGDSASAAEQSGEATRMSHVSTGGGASLELLEGKTLPGVAILDEKV.

Residues V23, D24, F25, N26, R39, S61, H62, G64, R65, R135, H171, and R172 each coordinate (2R)-3-phosphoglycerate. G217 is a binding site for ADP. Residue G217 participates in CDP binding. K219 is a (2R)-3-phosphoglycerate binding site. K219 serves as a coordination point for AMP. D222 contacts CDP. Position 222 (D222) interacts with Mg(2+). Residues K223 and G241 each coordinate ADP. K223 provides a ligand contact to AMP. K223 is an ATP binding site. G241 serves as a coordination point for CDP. The AMP site is built by A242 and A314. Residues A242 and A314 each contribute to the ATP site. A314 and N338 together coordinate ADP. G339 and F344 together coordinate CDP. Residues F344, E345, D377, and S378 each contribute to the ADP site. An AMP-binding site is contributed by E345. Residues E345, D377, and S378 each coordinate ATP. Residue D377 participates in Mg(2+) binding.

Belongs to the phosphoglycerate kinase family. Monomer. It depends on Mg(2+) as a cofactor.

Its subcellular location is the cytoplasm. It catalyses the reaction (2R)-3-phosphoglycerate + ATP = (2R)-3-phospho-glyceroyl phosphate + ADP. It participates in carbohydrate degradation; glycolysis; pyruvate from D-glyceraldehyde 3-phosphate: step 2/5. The polypeptide is Phosphoglycerate kinase, cytosolic (C1PGK) (Trypanosoma congolense).